The primary structure comprises 226 residues: Ribonuclease 3 (226 aa).

Positions 5–127 constitute an RNase III domain; the sequence is IFQRGDPIGH…IVAAIYLDCG (123 aa). Residue Glu40 participates in Mg(2+) binding. The active site involves Asp44. Mg(2+)-binding residues include Asp113 and Glu116. Residue Glu116 is part of the active site. A DRBM domain is found at 154 to 224; sequence DPKTRLQEWL…ATLVIAQLDS (71 aa).

This sequence belongs to the ribonuclease III family. As to quaternary structure, homodimer. Mg(2+) serves as cofactor.

The protein localises to the cytoplasm. The enzyme catalyses Endonucleolytic cleavage to 5'-phosphomonoester.. Functionally, digests double-stranded RNA. Involved in the processing of primary rRNA transcript to yield the immediate precursors to the large and small rRNAs (23S and 16S). Processes some mRNAs, and tRNAs when they are encoded in the rRNA operon. Processes pre-crRNA and tracrRNA of type II CRISPR loci if present in the organism. The sequence is that of Ribonuclease 3 from Xanthomonas oryzae pv. oryzae (strain KACC10331 / KXO85).